The sequence spans 274 residues: Subtilisin DY (274 aa).

Residue Q2 coordinates Ca(2+). Positions 5–273 (PYGIPLIKAD…KGLINVEAAA (269 aa)) constitute a Peptidase S8 domain. Catalysis depends on D32, which acts as the Charge relay system. D41 is a binding site for Ca(2+). H63 acts as the Charge relay system in catalysis. 6 residues coordinate Ca(2+): L74, N76, V80, A168, Y170, and V173. S220 acts as the Charge relay system in catalysis.

The protein belongs to the peptidase S8 family. Requires Ca(2+) as cofactor.

The protein resides in the secreted. The enzyme catalyses Hydrolysis of proteins with broad specificity for peptide bonds, and a preference for a large uncharged residue in P1. Hydrolyzes peptide amides.. Functionally, subtilisin is an extracellular alkaline serine protease, it catalyzes the hydrolysis of proteins and peptide amides. This chain is Subtilisin DY (apr), found in Bacillus licheniformis.